We begin with the raw amino-acid sequence, 618 residues long: DNA mismatch repair protein MutL (618 aa).

Residues 371-401 (AREPATPRYSGGASGGSGGRQSVGGWSHAQP) form a disordered region. Residues 382–392 (GASGGSGGRQS) are compositionally biased toward gly residues.

Belongs to the DNA mismatch repair MutL/HexB family.

Functionally, this protein is involved in the repair of mismatches in DNA. It is required for dam-dependent methyl-directed DNA mismatch repair. May act as a 'molecular matchmaker', a protein that promotes the formation of a stable complex between two or more DNA-binding proteins in an ATP-dependent manner without itself being part of a final effector complex. The protein is DNA mismatch repair protein MutL of Salmonella arizonae (strain ATCC BAA-731 / CDC346-86 / RSK2980).